Consider the following 182-residue polypeptide: Flightin (182 aa).

Residues 1–15 (MADEEDPWGFDDGGE) are compositionally biased toward acidic residues. The interval 1-76 (MADEEDPWGF…PPPPEDDGYR (76 aa)) is disordered.

Several forms of flightin are thought to be produced through post-translational modifications, possibly by phosphorylation. Found only in indirect flight muscles (IFM).

In terms of biological role, possibly involved in the regulation of flight muscles contraction, possibly by modulating actin-myosin interaction. This chain is Flightin (fln), found in Drosophila melanogaster (Fruit fly).